We begin with the raw amino-acid sequence, 537 residues long: RNA polymerase sigma-54 factor 2 (537 aa).

The disordered stretch occupies residues 52–90; the sequence is ANDEASGGEAPAEAGQFSDSDGGHNDEPGGGPGEAFEPG. Residues 55-66 are compositionally biased toward low complexity; the sequence is EASGGEAPAEAG. The segment at residues 403 to 422 is a DNA-binding region (H-T-H motif); it reads NLKAVADAIQMHESTVSRVT. Positions 492-500 match the RPON box motif; the sequence is ARRTVAKYR. The disordered stretch occupies residues 507 to 537; the sequence is SSVQRRRDKQSALGNVLSTAMSDRSRNPEPA. A compositionally biased stretch (polar residues) spans 518 to 528; that stretch reads ALGNVLSTAMS.

The protein belongs to the sigma-54 factor family.

Sigma factors are initiation factors that promote the attachment of RNA polymerase to specific initiation sites and are then released. This sigma factor is responsible for the expression of the nitrogen fixation genes. The chain is RNA polymerase sigma-54 factor 2 (rpoN2) from Bradyrhizobium diazoefficiens (strain JCM 10833 / BCRC 13528 / IAM 13628 / NBRC 14792 / USDA 110).